The following is a 236-amino-acid chain: MICOS complex subunit MIC25 (236 aa).

Residues 1 to 11 (MGSAESREGRR) are compositionally biased toward basic and acidic residues. Positions 1 to 22 (MGSAESREGRRASFGMDEEERV) are disordered. Residue Gly-2 is the site of N-myristoyl glycine attachment. Phosphoserine is present on residues Ser-13 and Ser-31. 2 disordered regions span residues 34–86 (VVNR…VQVD) and 109–132 (EREAAASPRSVTLRRGEGGVDQEK). Residues 48–58 (GLLAPPAAALG) show a composition bias toward low complexity. Basic and acidic residues-rich tracts occupy residues 62–71 (GREKDSKPPR) and 122–132 (RRGEGGVDQEK). The stretch at 127–167 (GVDQEKQRLAQRARELESQEEELRCRDAFYKEQLGRLERQN) forms a coiled coil. The 42-residue stretch at 195–236 (EPVCSGLQAQILRCYRDRLQEVLLCADLVRAYQHCVSSAHKG) folds into the CHCH domain. 2 consecutive short sequence motifs (cx9C motif) follow at residues 198–208 (CSGLQAQILRC) and 219–229 (CADLVRAYQHC). Intrachain disulfides connect Cys-198–Cys-229 and Cys-208–Cys-219.

It belongs to the MICOS complex subunit Mic19 family. Metazoan Mic25 subfamily. Component of the mitochondrial contact site and cristae organizing system (MICOS) complex, composed of at least MICOS10/MIC10, CHCHD3/MIC19, CHCHD6/MIC25, APOOL/MIC27, IMMT/MIC60, APOO/MIC23/MIC26 and MICOS13/MIC13. This complex was also known under the names MINOS or MitOS complex. The MICOS complex associates with mitochondrial outer membrane proteins SAMM50, MTX1 and MTX2 (together described as components of the mitochondrial outer membrane sorting assembly machinery (SAM) complex) and DNAJC11, mitochondrial inner membrane protein TMEM11 and with HSPA9. The MICOS and SAM complexes together with DNAJC11 are part of a large protein complex spanning both membranes termed the mitochondrial intermembrane space bridging (MIB) complex. Interacts with DISC1. Interacts with IMMT/MIC60.

It localises to the mitochondrion inner membrane. The protein resides in the mitochondrion. Functionally, component of the MICOS complex, a large protein complex of the mitochondrial inner membrane that plays crucial roles in the maintenance of crista junctions, inner membrane architecture, and formation of contact sites to the outer membrane. This chain is MICOS complex subunit MIC25 (CHCHD6), found in Bos taurus (Bovine).